A 121-amino-acid chain; its full sequence is Large ribosomal subunit protein bL12 (121 aa).

It belongs to the bacterial ribosomal protein bL12 family. As to quaternary structure, homodimer. Part of the ribosomal stalk of the 50S ribosomal subunit. Forms a multimeric L10(L12)X complex, where L10 forms an elongated spine to which 2 to 4 L12 dimers bind in a sequential fashion. Binds GTP-bound translation factors.

Its function is as follows. Forms part of the ribosomal stalk which helps the ribosome interact with GTP-bound translation factors. Is thus essential for accurate translation. The chain is Large ribosomal subunit protein bL12 from Aliivibrio salmonicida (strain LFI1238) (Vibrio salmonicida (strain LFI1238)).